A 48-amino-acid chain; its full sequence is MARFEEAENRMFNVKICLKCNARNPAAATTCRKCGYTGLRFKAKEPRG.

It belongs to the eukaryotic ribosomal protein eL40 family.

This Methanobrevibacter smithii (strain ATCC 35061 / DSM 861 / OCM 144 / PS) protein is Large ribosomal subunit protein eL40.